Here is a 240-residue protein sequence, read N- to C-terminus: Sugar fermentation stimulation protein homolog (240 aa).

It belongs to the SfsA family.

The polypeptide is Sugar fermentation stimulation protein homolog (Pasteurella multocida (strain Pm70)).